A 257-amino-acid chain; its full sequence is Beta-fibrinogenase mucrofibrase-5 (257 aa).

The signal sequence occupies residues 1-18; the sequence is MVLIRVLANLLILQLSYA. The propeptide occupies 19-24; it reads QKSSEL. The region spanning 25 to 248 is the Peptidase S1 domain; it reads IIGGDECNIN…HLDWIKGIIA (224 aa). Disulfide bonds link Cys-31–Cys-162, Cys-49–Cys-65, Cys-97–Cys-255, Cys-141–Cys-209, Cys-173–Cys-188, and Cys-199–Cys-224. The Charge relay system role is filled by His-64. The N-linked (GlcNAc...) asparagine glycan is linked to Asn-102. The active-site Charge relay system is Asp-109. The active-site Charge relay system is Ser-203.

This sequence belongs to the peptidase S1 family. Snake venom subfamily. In terms of assembly, monomer. As to expression, expressed by the venom gland.

It localises to the secreted. Its function is as follows. Snake venom serine protease with strong beta-fibrinogenolytic activities, angiotensin I (AGT)-degrading activities and strong kallikrein-like activities in vitro, releasing bradykinin from kininogen (KNG1). Intravenous injection mildly lowers blood pressure in experimental rats, which may be explained by the action on angiotensin I and kininogen. Exhibits amidase activity against N-benzoyl-Pro-Phe-Arg-p-nitroanilide in vitro. This Protobothrops mucrosquamatus (Taiwan habu) protein is Beta-fibrinogenase mucrofibrase-5.